The chain runs to 272 residues: Tryptophan synthase alpha chain (272 aa).

Catalysis depends on proton acceptor residues Glu49 and Glu60.

The protein belongs to the TrpA family. In terms of assembly, tetramer of two alpha and two beta chains.

It carries out the reaction (1S,2R)-1-C-(indol-3-yl)glycerol 3-phosphate + L-serine = D-glyceraldehyde 3-phosphate + L-tryptophan + H2O. It participates in amino-acid biosynthesis; L-tryptophan biosynthesis; L-tryptophan from chorismate: step 5/5. In terms of biological role, the alpha subunit is responsible for the aldol cleavage of indoleglycerol phosphate to indole and glyceraldehyde 3-phosphate. The sequence is that of Tryptophan synthase alpha chain from Legionella pneumophila subsp. pneumophila (strain Philadelphia 1 / ATCC 33152 / DSM 7513).